The sequence spans 688 residues: DNA ligase (688 aa).

Residues Asp38–Asp42, Ser87–Leu88, and Glu118 each bind NAD(+). The N6-AMP-lysine intermediate role is filled by Lys120. Residues Arg141, Glu175, Lys291, and Lys315 each coordinate NAD(+). Positions 409, 412, 428, and 433 each coordinate Zn(2+). The BRCT domain maps to Met590–Glu679.

This sequence belongs to the NAD-dependent DNA ligase family. LigA subfamily. Mg(2+) serves as cofactor. Requires Mn(2+) as cofactor.

The enzyme catalyses NAD(+) + (deoxyribonucleotide)n-3'-hydroxyl + 5'-phospho-(deoxyribonucleotide)m = (deoxyribonucleotide)n+m + AMP + beta-nicotinamide D-nucleotide.. DNA ligase that catalyzes the formation of phosphodiester linkages between 5'-phosphoryl and 3'-hydroxyl groups in double-stranded DNA using NAD as a coenzyme and as the energy source for the reaction. It is essential for DNA replication and repair of damaged DNA. This chain is DNA ligase, found in Thermotoga petrophila (strain ATCC BAA-488 / DSM 13995 / JCM 10881 / RKU-1).